The primary structure comprises 687 residues: Putative mitochondrial carnitine O-acetyltransferase (687 aa).

The active-site Proton acceptor is the histidine 346. 446–459 contributes to the CoA binding site; it reads GASHIKTVFKCSPD. 2 residues coordinate (R)-carnitine: tyrosine 481 and threonine 494. At serine 517 the chain carries Phosphoserine.

Belongs to the carnitine/choline acetyltransferase family.

The protein localises to the mitochondrion inner membrane. It catalyses the reaction (R)-carnitine + acetyl-CoA = O-acetyl-(R)-carnitine + CoA. Involved in the transfer of acetyl-CoA into mitochondria. May also be involved in the metabolism of acetate and of ethanol. The polypeptide is Putative mitochondrial carnitine O-acetyltransferase (YAT1) (Saccharomyces cerevisiae (strain ATCC 204508 / S288c) (Baker's yeast)).